The primary structure comprises 230 residues: MEDIKIKEIFENIYEVDLGDGLKRIATKSIVKGKKVYDEKIIKIGDEEYRIWNPNKSKLAAAIIKGLKVMPIKRDSKILYLGASAGTTPSHVADIADKGIVYAIEYAPRIMRELLDACAERENIIPILGDANKPQEYANIVEKVDVIYEDVAQPNQAEILIKNAKWFLKKGGYGMIAIKARSIDVTKDPKEIFKEQKEILEAGGFKIVDEVDIEPFEKDHVMFVGIWEGK.

S-adenosyl-L-methionine-binding positions include 87 to 88 (TT), 105 to 106 (EY), 130 to 131 (DA), and 150 to 153 (DVAQ).

As to quaternary structure, interacts with nop5. Component of box C/D small ribonucleoprotein (sRNP) particles that contain rpl7ae, FlpA and nop5, plus a guide RNA.

Functionally, involved in pre-rRNA and tRNA processing. Utilizes the methyl donor S-adenosyl-L-methionine to catalyze the site-specific 2'-hydroxyl methylation of ribose moieties in rRNA and tRNA. Site specificity is provided by a guide RNA that base pairs with the substrate. Methylation occurs at a characteristic distance from the sequence involved in base pairing with the guide RNA. The protein is Fibrillarin-like rRNA/tRNA 2'-O-methyltransferase of Methanocaldococcus jannaschii (strain ATCC 43067 / DSM 2661 / JAL-1 / JCM 10045 / NBRC 100440) (Methanococcus jannaschii).